Reading from the N-terminus, the 321-residue chain is Glucokinase (321 aa).

8–13 (ADIGGT) serves as a coordination point for ATP.

Belongs to the bacterial glucokinase family.

The protein resides in the cytoplasm. It carries out the reaction D-glucose + ATP = D-glucose 6-phosphate + ADP + H(+). The protein is Glucokinase of Photorhabdus laumondii subsp. laumondii (strain DSM 15139 / CIP 105565 / TT01) (Photorhabdus luminescens subsp. laumondii).